The chain runs to 220 residues: MQREKDSLIVVSGGMDSVTLMYEKRASIALALSFDYGSKHNARELSFARLHAERLGVEHLIIPLDFIGQYFQSDLLLSGGDIPEGRYDEENMKSTVVPFRNGIMLAVAAGLAESRGLRRIYIANHFGDHAIYPDCRASFIRPMTEAVRCGTTNGVLIEAPYTDITKTDIARIGASLGIDYAETWSCYKGGVFHCGVCGTCVERREALHDAGIPDATEYEG.

11-21 (VSGGMDSVTLM) contributes to the ATP binding site. Zn(2+)-binding residues include C186, C194, C197, and C200.

The protein belongs to the QueC family. The cofactor is Zn(2+).

The enzyme catalyses 7-carboxy-7-deazaguanine + NH4(+) + ATP = 7-cyano-7-deazaguanine + ADP + phosphate + H2O + H(+). The protein operates within purine metabolism; 7-cyano-7-deazaguanine biosynthesis. Catalyzes the ATP-dependent conversion of 7-carboxy-7-deazaguanine (CDG) to 7-cyano-7-deazaguanine (preQ(0)). The polypeptide is 7-cyano-7-deazaguanine synthase (Porphyromonas gingivalis (strain ATCC BAA-308 / W83)).